The sequence spans 631 residues: Origin recognition complex subunit 1 (631 aa).

Low complexity-rich tracts occupy residues 1 to 14 and 22 to 37; these read MTDE…YPPI and KLNN…NNNH. A disordered region spans residues 1 to 164; it reads MTDESSSSIS…EEEDEEGKFN (164 aa). Over residues 55–80 the composition is skewed to basic and acidic residues; that stretch reads DNEKIGFSDPENEKINKHKASFKDSN. Residues 91 to 104 show a composition bias toward acidic residues; sequence EDTDDDDYEDEDED. Residues 105–133 are compositionally biased toward basic and acidic residues; it reads ENHKIKDESDNSEDFNNHTKNTTDLDEGF. Residues 141 to 160 show a composition bias toward acidic residues; the sequence is ESEEEEEEEEYEEEEEEDEE. Residues Val-230 and 265 to 273 each bind ATP; that span reads GMPGTGKTA. Positions 361 and 362 each coordinate Mg(2+). ATP-binding residues include Glu-362, Asn-395, and Arg-460.

This sequence belongs to the ORC1 family. In terms of assembly, ORC is composed of six subunits.

The protein localises to the nucleus. Functionally, component of the origin recognition complex (ORC) that binds origins of replication. DNA-binding is ATP-dependent, however specific DNA sequences that define origins of replication have not been identified so far. ORC is required to assemble the pre-replication complex necessary to initiate DNA replication. The chain is Origin recognition complex subunit 1 (orcA) from Dictyostelium discoideum (Social amoeba).